We begin with the raw amino-acid sequence, 151 residues long: Coiled-coil-helix-coiled-coil-helix domain-containing protein 2 (151 aa).

2 disordered regions span residues 1 to 50 (MPRG…AAAP) and 77 to 111 (GHAITGGFSGGSNAEPARPDITYQEPQGTQPAQQQ). Residues 10–26 (SRMAPPASRAPQMRAAP) are compositionally biased toward low complexity. Over residues 27–38 (RPAPVAQPPAAA) the composition is skewed to pro residues. Composition is skewed to low complexity over residues 39-50 (PPSAVGSSAAAP) and 100-111 (QEPQGTQPAQQQ). Residues 111–151 (QQPCLYEIKQFLECAQNQGDIKLCEGFNEVLKQCRLANGLA) enclose the CHCH domain. 2 consecutive short sequence motifs (cx9C motif) follow at residues 114-124 (CLYEIKQFLEC) and 134-144 (CEGFNEVLKQC). Cystine bridges form between Cys114/Cys144 and Cys124/Cys134.

As to quaternary structure, interacts with RBPJ.

It is found in the nucleus. It localises to the mitochondrion. Its subcellular location is the mitochondrion intermembrane space. Transcription factor. Binds to the oxygen responsive element of COX4I2 and activates its transcription under hypoxia conditions (4% oxygen), as well as normoxia conditions (20% oxygen). The chain is Coiled-coil-helix-coiled-coil-helix domain-containing protein 2 (CHCHD2) from Homo sapiens (Human).